A 227-amino-acid polypeptide reads, in one-letter code: Cytochrome c oxidase subunit 2 (227 aa).

The Mitochondrial intermembrane portion of the chain corresponds to 1–14 (MAYPMQLGLQDATS). Residues 15-45 (PIMEELTDFHDHTLMIVFLISTLVLYIISLM) traverse the membrane as a helical segment. At 46-59 (LTTKLTHTNTMDAQ) the chain is on the mitochondrial matrix side. The chain crosses the membrane as a helical span at residues 60 to 87 (EVETVWTILPAIILIMIALPSLRILYMM). The Mitochondrial intermembrane portion of the chain corresponds to 88-227 (DEINDPYLTV…QFESWTSSMT (140 aa)). The Cu cation site is built by H161, C196, E198, C200, H204, and M207. Mg(2+) is bound at residue E198.

It belongs to the cytochrome c oxidase subunit 2 family. In terms of assembly, component of the cytochrome c oxidase (complex IV, CIV), a multisubunit enzyme composed of 14 subunits. The complex is composed of a catalytic core of 3 subunits MT-CO1, MT-CO2 and MT-CO3, encoded in the mitochondrial DNA, and 11 supernumerary subunits COX4I, COX5A, COX5B, COX6A, COX6B, COX6C, COX7A, COX7B, COX7C, COX8 and NDUFA4, which are encoded in the nuclear genome. The complex exists as a monomer or a dimer and forms supercomplexes (SCs) in the inner mitochondrial membrane with NADH-ubiquinone oxidoreductase (complex I, CI) and ubiquinol-cytochrome c oxidoreductase (cytochrome b-c1 complex, complex III, CIII), resulting in different assemblies (supercomplex SCI(1)III(2)IV(1) and megacomplex MCI(2)III(2)IV(2)). Found in a complex with TMEM177, COA6, COX18, COX20, SCO1 and SCO2. Interacts with TMEM177 in a COX20-dependent manner. Interacts with COX20. Interacts with COX16. Cu cation serves as cofactor.

The protein localises to the mitochondrion inner membrane. It catalyses the reaction 4 Fe(II)-[cytochrome c] + O2 + 8 H(+)(in) = 4 Fe(III)-[cytochrome c] + 2 H2O + 4 H(+)(out). Its function is as follows. Component of the cytochrome c oxidase, the last enzyme in the mitochondrial electron transport chain which drives oxidative phosphorylation. The respiratory chain contains 3 multisubunit complexes succinate dehydrogenase (complex II, CII), ubiquinol-cytochrome c oxidoreductase (cytochrome b-c1 complex, complex III, CIII) and cytochrome c oxidase (complex IV, CIV), that cooperate to transfer electrons derived from NADH and succinate to molecular oxygen, creating an electrochemical gradient over the inner membrane that drives transmembrane transport and the ATP synthase. Cytochrome c oxidase is the component of the respiratory chain that catalyzes the reduction of oxygen to water. Electrons originating from reduced cytochrome c in the intermembrane space (IMS) are transferred via the dinuclear copper A center (CU(A)) of subunit 2 and heme A of subunit 1 to the active site in subunit 1, a binuclear center (BNC) formed by heme A3 and copper B (CU(B)). The BNC reduces molecular oxygen to 2 water molecules using 4 electrons from cytochrome c in the IMS and 4 protons from the mitochondrial matrix. In Cratogeomys castanops (Yellow-faced pocket gopher), this protein is Cytochrome c oxidase subunit 2 (MT-CO2).